The sequence spans 354 residues: Phosphatidylserine decarboxylase proenzyme (354 aa).

The helical transmembrane segment at 18-36 (YLITGVTILSFILMFQYKY) threads the bilayer. Active-site charge relay system; for autoendoproteolytic cleavage activity residues include D139, H198, and S308. Catalysis depends on S308, which acts as the Schiff-base intermediate with substrate; via pyruvic acid; for decarboxylase activity. S308 is subject to Pyruvic acid (Ser); by autocatalysis.

It belongs to the phosphatidylserine decarboxylase family. PSD-B subfamily. Eukaryotic type I sub-subfamily. In terms of assembly, heterodimer of a large membrane-associated beta subunit and a small pyruvoyl-containing alpha subunit. The cofactor is pyruvate. In terms of processing, is synthesized initially as an inactive proenzyme. Formation of the active enzyme involves a self-maturation process in which the active site pyruvoyl group is generated from an internal serine residue via an autocatalytic post-translational modification. Two non-identical subunits are generated from the proenzyme in this reaction, and the pyruvate is formed at the N-terminus of the alpha chain, which is derived from the carboxyl end of the proenzyme. The autoendoproteolytic cleavage occurs by a canonical serine protease mechanism, in which the side chain hydroxyl group of the serine supplies its oxygen atom to form the C-terminus of the beta chain, while the remainder of the serine residue undergoes an oxidative deamination to produce ammonia and the pyruvoyl prosthetic group on the alpha chain. During this reaction, the Ser that is part of the protease active site of the proenzyme becomes the pyruvoyl prosthetic group, which constitutes an essential element of the active site of the mature decarboxylase.

The protein resides in the membrane. It is found in the endoplasmic reticulum membrane. The catalysed reaction is a 1,2-diacyl-sn-glycero-3-phospho-L-serine + H(+) = a 1,2-diacyl-sn-glycero-3-phosphoethanolamine + CO2. It functions in the pathway phospholipid metabolism; phosphatidylethanolamine biosynthesis; phosphatidylethanolamine from CDP-diacylglycerol: step 2/2. Its activity is regulated as follows. Protease activity is inhibited by PMSF. Its function is as follows. Catalyzes the formation of phosphatidylethanolamine (PtdEtn) from phosphatidylserine (PtdSer). Plays a central role in phospholipid metabolism and in the interorganelle trafficking of phosphatidylserine. This Plasmodium knowlesi (strain H) protein is Phosphatidylserine decarboxylase proenzyme.